The chain runs to 434 residues: Serine hydroxymethyltransferase (434 aa).

Residues L128 and 132-134 (GHL) each bind (6S)-5,6,7,8-tetrahydrofolate. The residue at position 237 (K237) is an N6-(pyridoxal phosphate)lysine.

This sequence belongs to the SHMT family. Homodimer. It depends on pyridoxal 5'-phosphate as a cofactor.

The protein localises to the cytoplasm. It carries out the reaction (6R)-5,10-methylene-5,6,7,8-tetrahydrofolate + glycine + H2O = (6S)-5,6,7,8-tetrahydrofolate + L-serine. It functions in the pathway one-carbon metabolism; tetrahydrofolate interconversion. The protein operates within amino-acid biosynthesis; glycine biosynthesis; glycine from L-serine: step 1/1. Its function is as follows. Catalyzes the reversible interconversion of serine and glycine with tetrahydrofolate (THF) serving as the one-carbon carrier. This reaction serves as the major source of one-carbon groups required for the biosynthesis of purines, thymidylate, methionine, and other important biomolecules. Also exhibits THF-independent aldolase activity toward beta-hydroxyamino acids, producing glycine and aldehydes, via a retro-aldol mechanism. In Corynebacterium glutamicum (strain R), this protein is Serine hydroxymethyltransferase.